The sequence spans 473 residues: Probable glucose-6-phosphate 1-dehydrogenase C7.13c (473 aa).

NADP(+) is bound by residues Arg-43, Tyr-121, and Lys-144. D-glucose 6-phosphate is bound by residues Lys-144, 174 to 178 (HYTAK), Glu-213, and Asp-232. The Proton acceptor role is filled by His-237. Lys-331 provides a ligand contact to D-glucose 6-phosphate. Lys-341 provides a ligand contact to NADP(+). Gln-366 is a binding site for D-glucose 6-phosphate.

This sequence belongs to the glucose-6-phosphate dehydrogenase family.

Its subcellular location is the cytoplasm. It carries out the reaction D-glucose 6-phosphate + NADP(+) = 6-phospho-D-glucono-1,5-lactone + NADPH + H(+). The protein operates within carbohydrate degradation; pentose phosphate pathway; D-ribulose 5-phosphate from D-glucose 6-phosphate (oxidative stage): step 1/3. In terms of biological role, catalyzes the rate-limiting step of the oxidative pentose-phosphate pathway, which represents a route for the dissimilation of carbohydrates besides glycolysis. The main function of this enzyme is to provide reducing power (NADPH) and pentose phosphates for fatty acid and nucleic acid synthesis. The polypeptide is Probable glucose-6-phosphate 1-dehydrogenase C7.13c (Schizosaccharomyces pombe (strain 972 / ATCC 24843) (Fission yeast)).